The chain runs to 380 residues: Cytochrome b (380 aa).

4 helical membrane-spanning segments follow: residues phenylalanine 33–methionine 53, tryptophan 77–isoleucine 98, tryptophan 113–leucine 133, and phenylalanine 178–leucine 198. Positions 83 and 97 each coordinate heme b. Residues histidine 182 and histidine 196 each contribute to the heme b site. Position 201 (histidine 201) interacts with a ubiquinone. A run of 4 helical transmembrane segments spans residues isoleucine 226–serine 246, leucine 288–histidine 308, leucine 320–glycine 340, and phenylalanine 347–proline 367.

It belongs to the cytochrome b family. The cytochrome bc1 complex contains 11 subunits: 3 respiratory subunits (MT-CYB, CYC1 and UQCRFS1), 2 core proteins (UQCRC1 and UQCRC2) and 6 low-molecular weight proteins (UQCRH/QCR6, UQCRB/QCR7, UQCRQ/QCR8, UQCR10/QCR9, UQCR11/QCR10 and a cleavage product of UQCRFS1). This cytochrome bc1 complex then forms a dimer. The cofactor is heme b.

It is found in the mitochondrion inner membrane. Component of the ubiquinol-cytochrome c reductase complex (complex III or cytochrome b-c1 complex) that is part of the mitochondrial respiratory chain. The b-c1 complex mediates electron transfer from ubiquinol to cytochrome c. Contributes to the generation of a proton gradient across the mitochondrial membrane that is then used for ATP synthesis. This chain is Cytochrome b (MT-CYB), found in Gorilla gorilla gorilla (Western lowland gorilla).